Consider the following 557-residue polypeptide: Formate--tetrahydrofolate ligase (557 aa).

Residue 65–72 (TPAGEGKT) coordinates ATP.

It belongs to the formate--tetrahydrofolate ligase family.

It carries out the reaction (6S)-5,6,7,8-tetrahydrofolate + formate + ATP = (6R)-10-formyltetrahydrofolate + ADP + phosphate. Its pathway is one-carbon metabolism; tetrahydrofolate interconversion. This chain is Formate--tetrahydrofolate ligase, found in Acidiphilium cryptum (strain JF-5).